A 132-amino-acid polypeptide reads, in one-letter code: Snaclec bothroinsularin subunit alpha (132 aa).

Cystine bridges form between cysteine 2–cysteine 13, cysteine 30–cysteine 127, and cysteine 102–cysteine 119. The 120-residue stretch at 9–128 (YGQYCYKFFQ…CGQQNPFVCK (120 aa)) folds into the C-type lectin domain.

The protein belongs to the snaclec family. As to quaternary structure, heterodimer of subunits alpha and beta; disulfide-linked. In terms of tissue distribution, expressed by the venom gland.

The protein localises to the secreted. In terms of biological role, thrombin and prothrombin (F2) inhibitor. The IC(50) of thrombin-induced platelet aggregation and fibrinocoagulation is 62 and 35 nM, respectively. Its inhibitory activity is at least 10-fold lower than that observed for other thrombin inhibitors. This chain is Snaclec bothroinsularin subunit alpha, found in Bothrops insularis (Golden lancehead).